Reading from the N-terminus, the 237-residue chain is MQKQAELYRGKAKTVYSTENPDLLVLEFRNDTSAGDGARIEQFDRKGMVNNKFNYFIMSKLAEAGIPTQMERLLSDTEALVKKLDMVPVECVIRNRAAGSLVKRLGIEEGIELNPPLFDLFLKNDAMHDPMVNESYCETFGWVSQENLARMKELTYKANDVLKKLFDDAGLILVDFKLEFGLFKGEVTLGDEFSPDGARLWDKQTMDKMDKDRFRQSLGGLIEAYEEVARRLGVNLD.

It belongs to the SAICAR synthetase family.

It carries out the reaction 5-amino-1-(5-phospho-D-ribosyl)imidazole-4-carboxylate + L-aspartate + ATP = (2S)-2-[5-amino-1-(5-phospho-beta-D-ribosyl)imidazole-4-carboxamido]succinate + ADP + phosphate + 2 H(+). It functions in the pathway purine metabolism; IMP biosynthesis via de novo pathway; 5-amino-1-(5-phospho-D-ribosyl)imidazole-4-carboxamide from 5-amino-1-(5-phospho-D-ribosyl)imidazole-4-carboxylate: step 1/2. The protein is Phosphoribosylaminoimidazole-succinocarboxamide synthase of Cronobacter sakazakii (strain ATCC BAA-894) (Enterobacter sakazakii).